Reading from the N-terminus, the 177-residue chain is CASP-like protein 5A2 (177 aa).

The Cytoplasmic segment spans residues 1–36 (MNASHPAVHPVGVPPAVAGQLPPRMRMKEIQGMPGT). The helical transmembrane segment at 37-57 (IGGLLLRLGQFCFALVAFSIM) threads the bilayer. Over 58–68 (VSIENFSTVTA) the chain is Extracellular. N62 carries N-linked (GlcNAc...) asparagine glycosylation. A helical transmembrane segment spans residues 69–89 (FCYLVAATVLQCLWSLALAII). At 90-103 (DGYALLVKRSLRNS) the chain is on the cytoplasmic side. The chain crosses the membrane as a helical span at residues 104–124 (LLVSLLVVGDGVTATLTFAAA). Topologically, residues 125 to 153 (CASAGITVLIGNDLRQCKENHCARYETAT) are extracellular. Residues 154-174 (ALAFLSWFMVSLSFILTFWLL) traverse the membrane as a helical segment. Residues 175–177 (ATR) lie on the Cytoplasmic side of the membrane.

The protein belongs to the Casparian strip membrane proteins (CASP) family. Homodimer and heterodimers.

Its subcellular location is the cell membrane. This chain is CASP-like protein 5A2, found in Ginkgo biloba (Ginkgo).